Consider the following 377-residue polypeptide: Gastricsin (377 aa).

The signal sequence occupies residues 1–5; sequence QLLEA. 2 consecutive propeptides (activation peptide) follow at residues 6 to 31 and 32 to 48; these read AVVKVPLKKFKSIRETMKEKGLLGEF and LRTHKYDPAWKYHFGDL. Residues 62 to 374 form the Peptidase A1 domain; it reads YFGEISIGTP…DLSNNRVGFA (313 aa). D80 is a catalytic residue. Intrachain disulfides connect C93/C98 and C256/C260. The active site involves D265. A disulfide bridge connects residues C299 and C332.

It belongs to the peptidase A1 family. In terms of processing, each pepsinogen is converted to corresponding pepsin at pH 2.0 in part as a result of the release of a 47 AA activation segment and in part as a result of stepwise proteolytic cleavage via an intermediate form(s).

It localises to the secreted. The enzyme catalyses More restricted specificity than pepsin A, but shows preferential cleavage at Tyr-|-Xaa bonds. High activity on hemoglobin.. Functionally, hydrolyzes a variety of proteins. The sequence is that of Gastricsin (PGC) from Macaca fuscata fuscata (Japanese macaque).